Reading from the N-terminus, the 365-residue chain is MFEVNPVLNKLKELSERTELLRGYLDYDAKKERLEEVSAELEQPEVWNEPERAQALGKERSALESVVATIDVLTQGAEDVEMLVSLAVEGEDEETFHEAETEADALEKKLVDLEFRRMFSGQHDASDCYMDIQSGSGGTEAQDWADMVLRMYLRWGEAHGYKPELIECSDGDVAGIKSATIKFTGEYAFGWLRTETGVHRLVRKSPFDSGGRRHTSFCSAFVYPEIDEDVEIEINPADLRIDVYRASGAGGQHVNRTESAVRITHIPTNTVTQCQNDRSQHKNKDQAMKQLKAKLYELEMMKQNAEKQALEETKSDIGWGSQIRSYVLDDSRIKDLRTGVETRNTQSVLDGDLDKFIEASLKSGL.

Glutamine 252 is modified (N5-methylglutamine).

It belongs to the prokaryotic/mitochondrial release factor family. In terms of processing, methylated by PrmC. Methylation increases the termination efficiency of RF2.

It is found in the cytoplasm. Functionally, peptide chain release factor 2 directs the termination of translation in response to the peptide chain termination codons UGA and UAA. This Tolumonas auensis (strain DSM 9187 / NBRC 110442 / TA 4) protein is Peptide chain release factor 2.